We begin with the raw amino-acid sequence, 339 residues long: tRNA N6-adenosine threonylcarbamoyltransferase (339 aa).

The Fe cation site is built by H111 and H115. Substrate contacts are provided by residues 139 to 143 (LVSGG), D172, G185, D189, and N280. D308 serves as a coordination point for Fe cation.

Belongs to the KAE1 / TsaD family. Fe(2+) is required as a cofactor.

Its subcellular location is the cytoplasm. It carries out the reaction L-threonylcarbamoyladenylate + adenosine(37) in tRNA = N(6)-L-threonylcarbamoyladenosine(37) in tRNA + AMP + H(+). In terms of biological role, required for the formation of a threonylcarbamoyl group on adenosine at position 37 (t(6)A37) in tRNAs that read codons beginning with adenine. Is involved in the transfer of the threonylcarbamoyl moiety of threonylcarbamoyl-AMP (TC-AMP) to the N6 group of A37, together with TsaE and TsaB. TsaD likely plays a direct catalytic role in this reaction. This chain is tRNA N6-adenosine threonylcarbamoyltransferase, found in Bacteroides fragilis (strain ATCC 25285 / DSM 2151 / CCUG 4856 / JCM 11019 / LMG 10263 / NCTC 9343 / Onslow / VPI 2553 / EN-2).